We begin with the raw amino-acid sequence, 254 residues long: Trypsin (254 aa).

The first 16 residues, 1–16 (MLRFIAVFALVNCALA), serve as a signal peptide directing secretion. Residues 17 to 26 (GTLPNDLDGR) constitute a propeptide, activation peptide. In terms of domain architecture, Peptidase S1 spans 27 to 252 (IVNGVDTTIE…VRSWIEKTAK (226 aa)). Cys53 and Cys69 are disulfide-bonded. Residues His68 and Asp113 each act as charge relay system in the active site. Intrachain disulfides connect Cys154–Cys158, Cys178–Cys195, and Cys204–Cys228. The Charge relay system role is filled by Ser208.

The protein belongs to the peptidase S1 family.

Its subcellular location is the secreted. The protein localises to the extracellular space. It carries out the reaction Preferential cleavage: Arg-|-Xaa, Lys-|-Xaa.. In terms of biological role, involved in digestion of a protein meal. This is Trypsin from Sarcophaga bullata (Grey flesh fly).